A 260-amino-acid polypeptide reads, in one-letter code: MEKKRFVLVHAVCHGAWSWYKVKTKLEAAGHCVTAVDLAASGINMTIVEEIQTLMDYSKPLLNFMSSLGSDDDKVILVAHSMGGIPAALAADIFSCKISAVVFLAAFMPDTRNPPAYVFEKLIRSIPREEWLDTAFGRYGNPDCPLESALLGPKFMAKKVYQRSPIEDLELAKMLVRVNPLVTNNLAGARSFTGEGYGSVTRIYIISGEDNILPEDYQRWMIRNFPVKEVMEIKDADHMAMFSKPKELCALLLEIADKYA.

The Acyl-ester intermediate role is filled by S81. Residues D210 and H238 each act as charge relay system in the active site.

The protein belongs to the AB hydrolase superfamily. Methylesterase family.

Functionally, putative methylesterase. In Arabidopsis thaliana (Mouse-ear cress), this protein is Putative methylesterase 19.